The chain runs to 47 residues: uncharacterized protein (47 aa).

The interval 19 to 47 (EKVLKNQNPDRLSHMTDKNAQPKSKEKEE) is disordered.

This is an uncharacterized protein from Bacillus subtilis (strain 168).